The chain runs to 182 residues: Lipid A acyltransferase PagP (182 aa).

Positions 1-21 are cleaved as a signal peptide; the sequence is MTQYFRALAFFLLLVPATAMA. Cysteine 22 carries N-palmitoyl cysteine lipidation. Cysteine 22 is lipidated: S-diacylglycerol cysteine. Catalysis depends on residues histidine 55, aspartate 98, and serine 99.

Belongs to the lipid A palmitoyltransferase family. Homodimer.

The protein localises to the cell outer membrane. It carries out the reaction a lipid A + a 1,2-diacyl-sn-glycero-3-phosphocholine = a hepta-acyl lipid A + a 2-acyl-sn-glycero-3-phosphocholine. It catalyses the reaction a lipid IVA + a 1,2-diacyl-sn-glycero-3-phosphocholine = a lipid IVB + a 2-acyl-sn-glycero-3-phosphocholine. The catalysed reaction is a lipid IIA + a 1,2-diacyl-sn-glycero-3-phosphocholine = a lipid IIB + a 2-acyl-sn-glycero-3-phosphocholine. Functionally, transfers a fatty acid residue from the sn-1 position of a phospholipid to the N-linked hydroxyfatty acid chain on the proximal unit of lipid A or its precursors. Required for resistance to cationic antimicrobial peptides (CAMPs). Modifications of lipid A with an acyl chain to evade host immune defenses by resisting antibody-mediated complement lysis during respiratory infection. This chain is Lipid A acyltransferase PagP, found in Bordetella bronchiseptica (strain ATCC BAA-588 / NCTC 13252 / RB50) (Alcaligenes bronchisepticus).